A 785-amino-acid polypeptide reads, in one-letter code: 5-methyltetrahydropteroyltriglutamate--homocysteine methyltransferase (785 aa).

5-methyltetrahydropteroyltri-L-glutamate contacts are provided by residues 15–18 (RELK) and Lys121. Residues 460-462 (IGS) and Glu513 each bind L-homocysteine. L-methionine-binding positions include 460 to 462 (IGS) and Glu513. 5-methyltetrahydropteroyltri-L-glutamate contacts are provided by residues 544 to 545 (RC) and Trp590. Residue Asp628 participates in L-homocysteine binding. Asp628 contributes to the L-methionine binding site. 5-methyltetrahydropteroyltri-L-glutamate is bound at residue Glu634. Zn(2+) contacts are provided by His670, Cys672, and Glu694. The active-site Proton donor is His723. Cys755 contacts Zn(2+).

The protein belongs to the vitamin-B12 independent methionine synthase family. It depends on Zn(2+) as a cofactor.

The enzyme catalyses 5-methyltetrahydropteroyltri-L-glutamate + L-homocysteine = tetrahydropteroyltri-L-glutamate + L-methionine. It functions in the pathway amino-acid biosynthesis; L-methionine biosynthesis via de novo pathway; L-methionine from L-homocysteine (MetE route): step 1/1. In terms of biological role, catalyzes the transfer of a methyl group from 5-methyltetrahydrofolate to homocysteine resulting in methionine formation. The protein is 5-methyltetrahydropteroyltriglutamate--homocysteine methyltransferase of Nitratidesulfovibrio vulgaris (strain ATCC 29579 / DSM 644 / CCUG 34227 / NCIMB 8303 / VKM B-1760 / Hildenborough) (Desulfovibrio vulgaris).